Consider the following 458-residue polypeptide: Cysteine--tRNA ligase (458 aa).

Cys-27 serves as a coordination point for Zn(2+). The short motif at 29–39 (ITPQSEPHIGH) is the 'HIGH' region element. Cys-207, His-232, and Glu-236 together coordinate Zn(2+). A 'KMSKS' region motif is present at residues 265–269 (KMSKS). An ATP-binding site is contributed by Lys-268.

It belongs to the class-I aminoacyl-tRNA synthetase family. As to quaternary structure, monomer. Zn(2+) is required as a cofactor.

It localises to the cytoplasm. It catalyses the reaction tRNA(Cys) + L-cysteine + ATP = L-cysteinyl-tRNA(Cys) + AMP + diphosphate. The chain is Cysteine--tRNA ligase from Dehalococcoides mccartyi (strain ATCC BAA-2266 / KCTC 15142 / 195) (Dehalococcoides ethenogenes (strain 195)).